The primary structure comprises 402 residues: Aminotransferase-like protein FGM3 (402 aa).

Pyridoxal 5'-phosphate-binding positions include 137-138, D218, and 282-283; these read TI and FG.

Belongs to the class-V pyridoxal-phosphate-dependent aminotransferase family. Csd subfamily.

Aminotransferase-like protein; part of the Fg3_54/C64 gene cluster that mediates the biosynthesis of the octapeptide fusaoctaxin A, a virulence factor that is required for cell-to-cell invasiveness of plant host. The 2 nonribosomal peptide synthetases NRPS9 and NRPS5 form an assembly line which likely utilizes GABA as a starter unit (loaded on the unique module M1 of NRPS9) and sequentially incorporates seven extender units composed of the residues L-Ala, L-allo-Ile, L-Ser, L-Val, L-Ser, L-Leu and L-Leu, respectively. During the process, each of the residues that are tethered on modules M3-M7 of NRPS5 containing an E domain can undergo an epimerization reaction to produce a D-configuration before the transpeptidation reaction occurs. The elongation of the peptidyl chain might be terminated by module M8-mediated L-Leu incorporation, followed by R domain-catalyzed 4 electron reduction to release the resulting octapeptide from the assembly line as an alcohol. Fusaoctaxin A is cleaved by the cluster specific ABC transporter FGM5 to the pentapeptide fusapentaxin A and the tripeptide fusatrixin A. The other enzymes from the cluster, FGM1, FGM2, FGM3 and FGM9 seem not to be involved in the biosynthesis of fusaoctaxin A and their functions have still to be determined. The chain is Aminotransferase-like protein FGM3 from Gibberella zeae (strain ATCC MYA-4620 / CBS 123657 / FGSC 9075 / NRRL 31084 / PH-1) (Wheat head blight fungus).